The chain runs to 343 residues: 7-epi-alpha-eudesmol synthase ((2E,6E)-farnesyl diphosphate cyclizing) (343 aa).

Positions 80 and 84 each coordinate Mg(2+). A DDXXD motif motif is present at residues 80–84 (DDQFD). A substrate-binding site is contributed by Arg177. Mg(2+) is bound by residues Asn223 and Ser227. Arg230 lines the substrate pocket. Glu231 serves as a coordination point for Mg(2+). Position 317-318 (317-318 (RY)) interacts with substrate.

The protein belongs to the terpene synthase family. Requires Mg(2+) as cofactor.

The catalysed reaction is (2E,6E)-farnesyl diphosphate + H2O = 7-epi-alpha-eudesmol + diphosphate. Its pathway is secondary metabolite biosynthesis; terpenoid biosynthesis. In terms of biological role, catalyzes the conversion of (2E,6E)-farnesyl diphosphate (FPP) to yield the bicyclic sesquiterpenol 7-epi-alpha-eudesmol via a 1,10-cyclization, which requires the abstraction of the pyrophosphate from FPP to yield the (E,E)-germacradienyl cation. The only accepted substrate is (2E,6E)-farnesyl diphosphate (FPP). The protein is 7-epi-alpha-eudesmol synthase ((2E,6E)-farnesyl diphosphate cyclizing) of Streptomyces viridochromogenes (strain DSM 40736 / JCM 4977 / BCRC 1201 / Tue 494).